The sequence spans 419 residues: Serine hydroxymethyltransferase (419 aa).

Residues leucine 121 and 125–127 (GHL) contribute to the (6S)-5,6,7,8-tetrahydrofolate site. Lysine 230 bears the N6-(pyridoxal phosphate)lysine mark. Residue 355–357 (SPF) coordinates (6S)-5,6,7,8-tetrahydrofolate.

This sequence belongs to the SHMT family. As to quaternary structure, homodimer. Pyridoxal 5'-phosphate serves as cofactor.

The protein resides in the cytoplasm. It carries out the reaction (6R)-5,10-methylene-5,6,7,8-tetrahydrofolate + glycine + H2O = (6S)-5,6,7,8-tetrahydrofolate + L-serine. It participates in one-carbon metabolism; tetrahydrofolate interconversion. It functions in the pathway amino-acid biosynthesis; glycine biosynthesis; glycine from L-serine: step 1/1. Functionally, catalyzes the reversible interconversion of serine and glycine with tetrahydrofolate (THF) serving as the one-carbon carrier. This reaction serves as the major source of one-carbon groups required for the biosynthesis of purines, thymidylate, methionine, and other important biomolecules. Also exhibits THF-independent aldolase activity toward beta-hydroxyamino acids, producing glycine and aldehydes, via a retro-aldol mechanism. The sequence is that of Serine hydroxymethyltransferase from Streptococcus equi subsp. zooepidemicus (strain H70).